Consider the following 212-residue polypeptide: ATP-dependent dethiobiotin synthetase BioD (212 aa).

12-17 provides a ligand contact to ATP; the sequence is DCGKTF. Residue T16 coordinates Mg(2+). The active site involves K33. Residue S37 coordinates substrate. ATP-binding positions include D50, 110-113, and 170-171; these read EGAG and NC. Mg(2+)-binding residues include D50 and E110.

It belongs to the dethiobiotin synthetase family. In terms of assembly, homodimer. Mg(2+) serves as cofactor.

Its subcellular location is the cytoplasm. It catalyses the reaction (7R,8S)-7,8-diammoniononanoate + CO2 + ATP = (4R,5S)-dethiobiotin + ADP + phosphate + 3 H(+). It participates in cofactor biosynthesis; biotin biosynthesis; biotin from 7,8-diaminononanoate: step 1/2. Catalyzes a mechanistically unusual reaction, the ATP-dependent insertion of CO2 between the N7 and N8 nitrogen atoms of 7,8-diaminopelargonic acid (DAPA, also called 7,8-diammoniononanoate) to form a ureido ring. In Legionella pneumophila (strain Paris), this protein is ATP-dependent dethiobiotin synthetase BioD.